A 185-amino-acid chain; its full sequence is Peptidyl-tRNA hydrolase (185 aa).

Tyr-14 contacts tRNA. The active-site Proton acceptor is the His-19. 3 residues coordinate tRNA: Phe-64, Asn-66, and Asn-112.

Belongs to the PTH family. Monomer.

The protein resides in the cytoplasm. It catalyses the reaction an N-acyl-L-alpha-aminoacyl-tRNA + H2O = an N-acyl-L-amino acid + a tRNA + H(+). Its function is as follows. Hydrolyzes ribosome-free peptidyl-tRNAs (with 1 or more amino acids incorporated), which drop off the ribosome during protein synthesis, or as a result of ribosome stalling. Catalyzes the release of premature peptidyl moieties from peptidyl-tRNA molecules trapped in stalled 50S ribosomal subunits, and thus maintains levels of free tRNAs and 50S ribosomes. In Lactobacillus gasseri (strain ATCC 33323 / DSM 20243 / BCRC 14619 / CIP 102991 / JCM 1131 / KCTC 3163 / NCIMB 11718 / NCTC 13722 / AM63), this protein is Peptidyl-tRNA hydrolase.